A 302-amino-acid chain; its full sequence is Lysosomal thioesterase PPT2 (302 aa).

Positions 1–27 (MPGLWRQRLPSAWALLLLPFLPLLLPA) are cleaved as a signal peptide. N60 is a glycosylation site (N-linked (GlcNAc...) asparagine). 2 disulfides stabilise this stretch: C109–C117 and C165–C176. S111 serves as the catalytic Nucleophile. N-linked (GlcNAc...) asparagine glycosylation is found at N190 and N206. The active site involves D228. N245 is a glycosylation site (N-linked (GlcNAc...) asparagine). A disulfide bond links C276 and C296. The active site involves H283. Residue N289 is glycosylated (N-linked (GlcNAc...) asparagine).

This sequence belongs to the palmitoyl-protein thioesterase family.

Its subcellular location is the lysosome. The enzyme catalyses hexadecanoyl-CoA + H2O = hexadecanoate + CoA + H(+). It catalyses the reaction S-hexadecanoyl-N-acetylcysteamine + H2O = N-acetylcysteamine + hexadecanoate + H(+). Catalyzes the cleavage of thioester bonds from S-palmitoyl-CoA or S-palmitoyl-N-acetylcysteamine (unbranched structures) but does not have activity against palmitoylcysteine or palmitoylated proteins, branched structures or bulky head groups. Conversely, hydrolyzes both long and short chain fatty acyl-CoA substrate. This is Lysosomal thioesterase PPT2 (Ppt2) from Rattus norvegicus (Rat).